We begin with the raw amino-acid sequence, 383 residues long: BRISC and BRCA1-A complex member 2 (383 aa).

N-acetylmethionine is present on M1. S2 carries the post-translational modification Phosphoserine. UEV-like regions lie at residues 30-147 (DATN…TLLE) and 275-364 (IAAF…RAKA).

This sequence belongs to the BABAM2 family. As to quaternary structure, component of the ARISC complex, at least composed of UIMC1/RAP80, ABRAXAS1, BRCC3/BRCC36, BABAM2 and BABAM1/NBA1. Component of the BRCA1-A complex, at least composed of BRCA1, BARD1, UIMC1/RAP80, ABRAXAS1, BRCC3/BRCC36, BABAM2 and BABAM1/NBA1. In the BRCA1-A complex, interacts directly with ABRAXAS1, BRCC3/BRCC36 and BABAM1/NBA1. Binds polyubiquitin. Component of the BRISC complex, at least composed of ABRAXAS2, BRCC3/BRCC36, BABAM2 and BABAM1/NBA1. Identified in a complex with SHMT2 and the other subunits of the BRISC complex. Component of the BRCA1/BRCA2 containing complex (BRCC), which also contains BRCA1, BRCA2, BARD1, BRCC3/BRCC36 and RAD51. BRCC is a ubiquitin E3 ligase complex that enhances cellular survival following DNA damage. May interact with FAS and TNFRSF1A.

The protein resides in the cytoplasm. It is found in the nucleus. Functionally, component of the BRCA1-A complex, a complex that specifically recognizes 'Lys-63'-linked ubiquitinated histones H2A and H2AX at DNA lesions sites, leading to target the BRCA1-BARD1 heterodimer to sites of DNA damage at double-strand breaks (DSBs). The BRCA1-A complex also possesses deubiquitinase activity that specifically removes 'Lys-63'-linked ubiquitin on histones H2A and H2AX. In the BRCA1-A complex, it acts as an adapter that bridges the interaction between BABAM1/NBA1 and the rest of the complex, thereby being required for the complex integrity and modulating the E3 ubiquitin ligase activity of the BRCA1-BARD1 heterodimer. Component of the BRISC complex, a multiprotein complex that specifically cleaves 'Lys-63'-linked ubiquitin in various substrates. Within the BRISC complex, acts as an adapter that bridges the interaction between BABAM1/NBA1 and the rest of the complex, thereby being required for the complex integrity. The BRISC complex is required for normal mitotic spindle assembly and microtubule attachment to kinetochores via its role in deubiquitinating NUMA1. The BRISC complex plays a role in interferon signaling via its role in the deubiquitination of the interferon receptor IFNAR1; deubiquitination increases IFNAR1 activity by enhancing its stability and cell surface expression. Down-regulates the response to bacterial lipopolysaccharide (LPS) via its role in IFNAR1 deubiquitination. May play a role in homeostasis or cellular differentiation in cells of neural, epithelial and germline origins. May also act as a death receptor-associated anti-apoptotic protein, which inhibits the mitochondrial apoptotic pathway. May regulate TNF-alpha signaling through its interactions with TNFRSF1A; however these effects may be indirect. This is BRISC and BRCA1-A complex member 2 (BABAM2) from Bos taurus (Bovine).